A 428-amino-acid polypeptide reads, in one-letter code: MKLYNLKDHNEQVSFAQAVTQGLGKNQGLFFPHDLPEFSLTEIDEMLKLDFVTRSAKILSAFIGDEIPQEILEERVRAAFAFPAPVANVESDVGCLELFHGPTLAFKDFGGRFMAQMLTHIAGDKPVTILTATSGDTGAAVAHAFYGLPNVKVVILYPRGKISPLQEKLFCTLGGNIETVAIDGDFDACQALVKQAFDDEELKVALGLNSANSINISRLLAQICYYFEAVAQLPQETRNQLVVSVPSGNFGDLTAGLLAKSLGLPVKRFIAATNVNDTVPRFLHDGQWSPKATQATLSNAMDVSQPNNWPRVEELFRRKIWQLKELGYAAVDDETTQQTMRELKELGYTSEPHAAVAYRALRDQLNPGEYGLFLGTAHPAKFKESVEAILGETLDLPKELAERADLPLLSHNLPADFAALRKLMMNHQ.

An N6-(pyridoxal phosphate)lysine modification is found at Lys-107.

The protein belongs to the threonine synthase family. It depends on pyridoxal 5'-phosphate as a cofactor.

It catalyses the reaction O-phospho-L-homoserine + H2O = L-threonine + phosphate. It participates in amino-acid biosynthesis; L-threonine biosynthesis; L-threonine from L-aspartate: step 5/5. Is competitively inhibited by L-threo-3-hydroxyhomoserine phosphate. Catalyzes the gamma-elimination of phosphate from L-phosphohomoserine and the beta-addition of water to produce L-threonine. To a lesser extent, is able to slowly catalyze the deamination of L-threonine into alpha-ketobutyrate and that of L-serine and 3-chloroalanine into pyruvate. Is also able to rapidly convert vinylglycine to threonine, which proves that the pyridoxal p-quinonoid of vinylglycine is an intermediate in the TS reaction. The sequence is that of Threonine synthase (thrC) from Escherichia coli (strain K12).